A 96-amino-acid chain; its full sequence is Muconolactone Delta-isomerase 2 (96 aa).

This sequence belongs to the muconolactone Delta-isomerase family. As to quaternary structure, homodecamer.

It catalyses the reaction (S)-muconolactone = (4,5-dihydro-5-oxofuran-2-yl)-acetate. Its pathway is aromatic compound metabolism; beta-ketoadipate pathway; 5-oxo-4,5-dihydro-2-furylacetate from catechol: step 3/3. This chain is Muconolactone Delta-isomerase 2 (catC2), found in Acinetobacter lwoffii.